The following is a 194-amino-acid chain: 5-formyltetrahydrofolate cyclo-ligase (194 aa).

ATP-binding positions include 6 to 10 (KSQLR), 139 to 146 (GRGAGFYD), and aspartate 177.

The protein belongs to the 5-formyltetrahydrofolate cyclo-ligase family.

It carries out the reaction (6S)-5-formyl-5,6,7,8-tetrahydrofolate + ATP = (6R)-5,10-methenyltetrahydrofolate + ADP + phosphate. Its pathway is one-carbon metabolism; tetrahydrofolate interconversion. In terms of biological role, involved in the removal of 5-formyltetrahydrofolate. In vitro, it is a potent inhibitor of various folate-dependent enzymes in the C1 metabolism network and in vivo it might function as a folate storage. 5-formyltetrahydrofolate is also used as an antifolate rescue agent in cancer chemotherapy. Catalyzes the irreversible ATP-dependent transformation of 5-formyltetrahydrofolate (5-CHO-THF) to form 5,10-methenyltetrahydrofolate (5,10-CH=THF). The reverse reaction is catalyzed by the serine hydroxymethyltransferase GlyA (SHMT). This is 5-formyltetrahydrofolate cyclo-ligase from Mycolicibacterium smegmatis (strain ATCC 700084 / mc(2)155) (Mycobacterium smegmatis).